The following is a 351-amino-acid chain: Nitronate monooxygenase (351 aa).

FMN contacts are provided by residues leucine 21, asparagine 69, glutamine 176, glycine 181, glycine 218, and glutamine 237–threonine 240.

This sequence belongs to the nitronate monooxygenase family. NMO class I subfamily. Requires FMN as cofactor.

It catalyses the reaction 3 propionate 3-nitronate + 3 O2 + H2O = 3 3-oxopropanoate + 2 nitrate + nitrite + H2O2 + 3 H(+). Nitronate monooxygenase that uses molecular oxygen to catalyze the oxidative denitrification of alkyl nitronates. The toxin propionate 3-nitronate (P3N) is the best substrate (and the presumed physiological substrate), but this enzyme is also active on other primary and secondary nitronates such as propyl-1-nitronate, ethylnitronate, pentyl-1-nitronate, butyl-1-nitronate and propyl-2-nitronate. Is likely involved in the degradation of P3N, that allows P.aeruginosa PAO1 to grow on 3-nitropropionate/P3N as the sole nitrogen source. Also functions in the detoxification of P3N, a metabolic poison produced by plants and fungi as a defense mechanism. Cannot oxidize nitroalkanes such as 3-nitropropionate, nitroethane, 1-nitropropane, 1-nitrobutane, 1-nitropentane, or 2-nitropropane. This Pseudomonas aeruginosa (strain ATCC 15692 / DSM 22644 / CIP 104116 / JCM 14847 / LMG 12228 / 1C / PRS 101 / PAO1) protein is Nitronate monooxygenase.